Reading from the N-terminus, the 246-residue chain is MTLSNEYLNAVSMMIVYGQDNSGTDFNYYYYSATTYSTYAPTGVVAVLKNSGNVVATLTGYQISLSTSSVKFIFYDTSNNEYSFDEVDIYTEMNGTLALLVSRTTGLSYSKSASEAVVAYFTLSLSQSPSLYINYAFMYLLVPRLVLQNVFPFSNYVGITSYSVSQVSGTISFDGAGYSNGELIIFLTLSTTGGANPIITAVTTQASTTTPSISSNQVLQAILPAPLPSTSSPVQYPIQIGVQYEE.

This is an uncharacterized protein from Acidianus sp. F28 (AFV-2).